Reading from the N-terminus, the 514-residue chain is 2,3-bisphosphoglycerate-independent phosphoglycerate mutase (514 aa).

Mn(2+) is bound by residues Asp14 and Ser64. The Phosphoserine intermediate role is filled by Ser64. Residues His125, 155–156, Arg187, Arg193, 263–266, and Lys336 each bind substrate; these read RD and RADR. Mn(2+) contacts are provided by Asp403, His407, Asp444, His445, and His463.

This sequence belongs to the BPG-independent phosphoglycerate mutase family. Monomer. Requires Mn(2+) as cofactor.

It catalyses the reaction (2R)-2-phosphoglycerate = (2R)-3-phosphoglycerate. Its pathway is carbohydrate degradation; glycolysis; pyruvate from D-glyceraldehyde 3-phosphate: step 3/5. With respect to regulation, insensitive to vanadate. Functionally, catalyzes the interconversion of 2-phosphoglycerate (2-PGA) and 3-phosphoglycerate (3-PGA). This chain is 2,3-bisphosphoglycerate-independent phosphoglycerate mutase, found in Escherichia coli (strain K12).